The chain runs to 193 residues: Thymidine kinase (193 aa).

ATP-binding positions include 9-16 (ASMNAGKS) and 87-90 (DEAQ). The active-site Proton acceptor is the glutamate 88. 4 residues coordinate Zn(2+): cysteine 145, cysteine 147, cysteine 182, and histidine 185.

It belongs to the thymidine kinase family. Homotetramer.

Its subcellular location is the cytoplasm. The enzyme catalyses thymidine + ATP = dTMP + ADP + H(+). This chain is Thymidine kinase, found in Zymomonas mobilis subsp. mobilis (strain ATCC 31821 / ZM4 / CP4).